A 255-amino-acid chain; its full sequence is Type III pantothenate kinase (255 aa).

6–13 provides a ligand contact to ATP; sequence DIGNSNID. 107–110 contributes to the substrate binding site; the sequence is GADL. The active-site Proton acceptor is D109. D129 is a K(+) binding site. T132 provides a ligand contact to ATP. Substrate is bound at residue T183.

It belongs to the type III pantothenate kinase family. Homodimer. It depends on NH4(+) as a cofactor. K(+) is required as a cofactor.

It localises to the cytoplasm. The catalysed reaction is (R)-pantothenate + ATP = (R)-4'-phosphopantothenate + ADP + H(+). It functions in the pathway cofactor biosynthesis; coenzyme A biosynthesis; CoA from (R)-pantothenate: step 1/5. Its function is as follows. Catalyzes the phosphorylation of pantothenate (Pan), the first step in CoA biosynthesis. The polypeptide is Type III pantothenate kinase (Dictyoglomus turgidum (strain DSM 6724 / Z-1310)).